We begin with the raw amino-acid sequence, 451 residues long: CBL-interacting protein kinase 22 (451 aa).

One can recognise a Protein kinase domain in the interval 26 to 301; sequence YELGRVLGQG…IGEIFDHPWL (276 aa). ATP is bound by residues 32–40 and Lys55; that span reads LGQGASSKV. Asp165 (proton acceptor) is an active-site residue. An activation loop region spans residues 183–216; sequence DFGLSAFADADQHLGATDGLAATHCGSPAYVAPE. The NAF domain occupies 330 to 356; that stretch reads ELEQAMELNAFDIIGFASGCDLSGLIG. The PPI stretch occupies residues 361-389; sequence RVRFVLPGGDSKSVLDKVEKLGREEGLVV.

It belongs to the protein kinase superfamily. CAMK Ser/Thr protein kinase family. SNF1 subfamily. Requires Mn(2+) as cofactor.

It carries out the reaction L-seryl-[protein] + ATP = O-phospho-L-seryl-[protein] + ADP + H(+). The enzyme catalyses L-threonyl-[protein] + ATP = O-phospho-L-threonyl-[protein] + ADP + H(+). CIPK serine-threonine protein kinases interact with CBL proteins. Binding of a CBL protein to the regulatory NAF domain of CIPK protein lead to the activation of the kinase in a calcium-dependent manner. The chain is CBL-interacting protein kinase 22 (CIPK22) from Oryza sativa subsp. japonica (Rice).